We begin with the raw amino-acid sequence, 153 residues long: Protein Smg homolog (153 aa).

Belongs to the Smg family.

This chain is Protein Smg homolog, found in Neisseria gonorrhoeae (strain ATCC 700825 / FA 1090).